The following is a 185-amino-acid chain: ATP synthase subunit delta (185 aa).

This sequence belongs to the ATPase delta chain family. F-type ATPases have 2 components, F(1) - the catalytic core - and F(0) - the membrane proton channel. F(1) has five subunits: alpha(3), beta(3), gamma(1), delta(1), epsilon(1). F(0) has three main subunits: a(1), b(2) and c(10-14). The alpha and beta chains form an alternating ring which encloses part of the gamma chain. F(1) is attached to F(0) by a central stalk formed by the gamma and epsilon chains, while a peripheral stalk is formed by the delta and b chains.

The protein localises to the cell inner membrane. F(1)F(0) ATP synthase produces ATP from ADP in the presence of a proton or sodium gradient. F-type ATPases consist of two structural domains, F(1) containing the extramembraneous catalytic core and F(0) containing the membrane proton channel, linked together by a central stalk and a peripheral stalk. During catalysis, ATP synthesis in the catalytic domain of F(1) is coupled via a rotary mechanism of the central stalk subunits to proton translocation. Its function is as follows. This protein is part of the stalk that links CF(0) to CF(1). It either transmits conformational changes from CF(0) to CF(1) or is implicated in proton conduction. This is ATP synthase subunit delta from Gemmatimonas aurantiaca (strain DSM 14586 / JCM 11422 / NBRC 100505 / T-27).